A 301-amino-acid chain; its full sequence is ATP synthase gamma chain (301 aa).

Belongs to the ATPase gamma chain family. F-type ATPases have 2 components, CF(1) - the catalytic core - and CF(0) - the membrane proton channel. CF(1) has five subunits: alpha(3), beta(3), gamma(1), delta(1), epsilon(1). CF(0) has three main subunits: a, b and c.

It is found in the cell inner membrane. Functionally, produces ATP from ADP in the presence of a proton gradient across the membrane. The gamma chain is believed to be important in regulating ATPase activity and the flow of protons through the CF(0) complex. The sequence is that of ATP synthase gamma chain from Helicobacter pylori (strain Shi470).